The primary structure comprises 124 residues: Aspartate 1-decarboxylase (124 aa).

Catalysis depends on S21, which acts as the Schiff-base intermediate with substrate; via pyruvic acid. A Pyruvic acid (Ser) modification is found at S21. T53 contributes to the substrate binding site. Y54 functions as the Proton donor in the catalytic mechanism. Substrate is bound at residue 69–71 (GAA).

It belongs to the PanD family. In terms of assembly, heterooctamer of four alpha and four beta subunits. Requires pyruvate as cofactor. Is synthesized initially as an inactive proenzyme, which is activated by self-cleavage at a specific serine bond to produce a beta-subunit with a hydroxyl group at its C-terminus and an alpha-subunit with a pyruvoyl group at its N-terminus.

Its subcellular location is the cytoplasm. It carries out the reaction L-aspartate + H(+) = beta-alanine + CO2. It functions in the pathway cofactor biosynthesis; (R)-pantothenate biosynthesis; beta-alanine from L-aspartate: step 1/1. In terms of biological role, catalyzes the pyruvoyl-dependent decarboxylation of aspartate to produce beta-alanine. The chain is Aspartate 1-decarboxylase from Dehalococcoides mccartyi (strain ATCC BAA-2266 / KCTC 15142 / 195) (Dehalococcoides ethenogenes (strain 195)).